An 81-amino-acid chain; its full sequence is Costars family protein ABRACL (81 aa).

The protein belongs to the costars family.

In Danio rerio (Zebrafish), this protein is Costars family protein ABRACL (abracl).